Consider the following 359-residue polypeptide: MSTSSHMYPMSSGHDQHSYIHNSSYQKAAISSAVEKTRRCIFEKLDLQLSSDFGTFRIADFGCSIGPNTFHVAQSIIDTVKSKRLEESTENSLVPLEFQVFFNDQPTNDFNTLFRTQPLSPEREYFSVGVPGSFYGRVLPRNSIHIGHTSYTTHWLSKVPDNVCDKKSMAWNKNYIQCNNLLEEVTKAYKVQFIKDMEIFLDARAEELVPGGLMIVIGECLPDGVSLYETWQGYVMDTIGDCLMDMAKSGITSEEKIDLFSLPVYFPQFSELKGEIEKNGSFTIELMETTSHPLEGKPLTNDFITSTFRAFLTTIIEKHFGDGVVDELFYRLAKKLSNHPIDFEMRKKQVVYCIVLKRK.

S-adenosyl-L-homocysteine is bound by residues Y19, C63, N68, D104, S133, and F134. 3 residues coordinate Mg(2+): N172, D258, and F260.

The protein belongs to the methyltransferase superfamily. Type-7 methyltransferase family. As to quaternary structure, homodimer. Mg(2+) is required as a cofactor.

In Arabidopsis thaliana (Mouse-ear cress), this protein is Probable S-adenosylmethionine-dependent methyltransferase At5g38100.